A 210-amino-acid polypeptide reads, in one-letter code: Na(+)-translocating NADH-quinone reductase subunit D (210 aa).

The next 6 helical transmembrane spans lie at 14–34 (PIIN…ALAV), 42–62 (LVMS…ISLI), 72–92 (IIVQ…VLQA), 96–116 (EIAK…IVMG), 131–151 (FMDG…VGFF), and 178–198 (NGLL…IWVI).

This sequence belongs to the NqrDE/RnfAE family. In terms of assembly, composed of six subunits; NqrA, NqrB, NqrC, NqrD, NqrE and NqrF.

The protein localises to the cell inner membrane. It catalyses the reaction a ubiquinone + n Na(+)(in) + NADH + H(+) = a ubiquinol + n Na(+)(out) + NAD(+). Its function is as follows. NQR complex catalyzes the reduction of ubiquinone-1 to ubiquinol by two successive reactions, coupled with the transport of Na(+) ions from the cytoplasm to the periplasm. NqrA to NqrE are probably involved in the second step, the conversion of ubisemiquinone to ubiquinol. The sequence is that of Na(+)-translocating NADH-quinone reductase subunit D from Shewanella denitrificans (strain OS217 / ATCC BAA-1090 / DSM 15013).